A 290-amino-acid chain; its full sequence is 33 kDa chaperonin (290 aa).

2 disulfides stabilise this stretch: Cys235/Cys237 and Cys268/Cys271.

This sequence belongs to the HSP33 family. Post-translationally, under oxidizing conditions two disulfide bonds are formed involving the reactive cysteines. Under reducing conditions zinc is bound to the reactive cysteines and the protein is inactive.

It is found in the cytoplasm. Redox regulated molecular chaperone. Protects both thermally unfolding and oxidatively damaged proteins from irreversible aggregation. Plays an important role in the bacterial defense system toward oxidative stress. This chain is 33 kDa chaperonin, found in Streptococcus equi subsp. zooepidemicus (strain H70).